The chain runs to 286 residues: UDP-3-O-acyl-N-acetylglucosamine deacetylase (286 aa).

3 residues coordinate Zn(2+): histidine 79, histidine 237, and aspartate 241. Catalysis depends on histidine 264, which acts as the Proton donor.

Belongs to the LpxC family. Zn(2+) is required as a cofactor.

It carries out the reaction a UDP-3-O-[(3R)-3-hydroxyacyl]-N-acetyl-alpha-D-glucosamine + H2O = a UDP-3-O-[(3R)-3-hydroxyacyl]-alpha-D-glucosamine + acetate. The protein operates within glycolipid biosynthesis; lipid IV(A) biosynthesis; lipid IV(A) from (3R)-3-hydroxytetradecanoyl-[acyl-carrier-protein] and UDP-N-acetyl-alpha-D-glucosamine: step 2/6. Functionally, catalyzes the hydrolysis of UDP-3-O-myristoyl-N-acetylglucosamine to form UDP-3-O-myristoylglucosamine and acetate, the committed step in lipid A biosynthesis. This chain is UDP-3-O-acyl-N-acetylglucosamine deacetylase, found in Brucella melitensis biotype 2 (strain ATCC 23457).